Consider the following 302-residue polypeptide: Deoxyhypusine hydroxylase (302 aa).

Met-1 bears the N-acetylmethionine mark. HEAT-like PBS-type repeat units lie at residues 54-80, 87-113, 175-201, 206-232, and 239-265; these read LKHELAYCLGQMRDPRAIPVLVSVLQD, VRHEAGEALGAIGNPKVLGLLKQYSTD, ERYRAMFALRNVGGKEAALALAEGLKC, FRHEVGYVLGQLQHEAAVSELAATLAR, and VRHECAEALGAIARPACLAALREYITD. Positions 56, 89, and 90 each coordinate Fe cation. The Fe cation site is built by His-208, His-241, and Glu-242.

It belongs to the deoxyhypusine hydroxylase family. Requires Fe(2+) as cofactor.

The enzyme catalyses [eIF5A protein]-deoxyhypusine + AH2 + O2 = [eIF5A protein]-hypusine + A + H2O. It functions in the pathway protein modification; eIF5A hypusination. Catalyzes the hydroxylation of the N(6)-(4-aminobutyl)-L-lysine intermediate produced by deoxyhypusine synthase/DHPS on a critical lysine of the eukaryotic translation initiation factor 5A/eIF-5A. This is the second step of the post-translational modification of that lysine into an unusual amino acid residue named hypusine. Hypusination is unique to mature eIF-5A factor and is essential for its function. The sequence is that of Deoxyhypusine hydroxylase (Dohh) from Rattus norvegicus (Rat).